The primary structure comprises 314 residues: Hydroxyethylthiazole kinase (314 aa).

Substrate is bound at residue M70. 2 residues coordinate ATP: R145 and S217. G244 is a substrate binding site.

It belongs to the Thz kinase family. Requires Mg(2+) as cofactor.

It catalyses the reaction 5-(2-hydroxyethyl)-4-methylthiazole + ATP = 4-methyl-5-(2-phosphooxyethyl)-thiazole + ADP + H(+). Its pathway is cofactor biosynthesis; thiamine diphosphate biosynthesis; 4-methyl-5-(2-phosphoethyl)-thiazole from 5-(2-hydroxyethyl)-4-methylthiazole: step 1/1. Functionally, catalyzes the phosphorylation of the hydroxyl group of 4-methyl-5-beta-hydroxyethylthiazole (THZ). This is Hydroxyethylthiazole kinase from Bifidobacterium longum (strain DJO10A).